The chain runs to 320 residues: Ferrochelatase (320 aa).

Residues H194 and E275 each contribute to the Fe cation site.

The protein belongs to the ferrochelatase family. As to quaternary structure, monomer.

The protein localises to the cytoplasm. It carries out the reaction heme b + 2 H(+) = protoporphyrin IX + Fe(2+). It participates in porphyrin-containing compound metabolism; protoheme biosynthesis; protoheme from protoporphyrin-IX: step 1/1. In terms of biological role, catalyzes the ferrous insertion into protoporphyrin IX. This chain is Ferrochelatase, found in Escherichia coli (strain K12 / MC4100 / BW2952).